We begin with the raw amino-acid sequence, 445 residues long: Methionine aminopeptidase 2 (445 aa).

Residues 1 to 80 (MAAQVASGVG…TSKVQTEPPR (80 aa)) form a disordered region. The segment covering 57–71 (AKKKKKKTKKKKKGT) has biased composition (basic residues). Residue histidine 195 participates in substrate binding. The a divalent metal cation site is built by aspartate 215, aspartate 226, and histidine 295. Residue histidine 303 participates in substrate binding. Glutamate 331 and glutamate 426 together coordinate a divalent metal cation.

This sequence belongs to the peptidase M24A family. Methionine aminopeptidase eukaryotic type 2 subfamily. Co(2+) is required as a cofactor. The cofactor is Zn(2+). It depends on Mn(2+) as a cofactor. Requires Fe(2+) as cofactor.

The protein resides in the cytoplasm. It carries out the reaction Release of N-terminal amino acids, preferentially methionine, from peptides and arylamides.. Cotranslationally removes the N-terminal methionine from nascent proteins. The N-terminal methionine is often cleaved when the second residue in the primary sequence is small and uncharged (Met-Ala-, Cys, Gly, Pro, Ser, Thr, or Val). In Paracoccidioides brasiliensis (strain Pb03), this protein is Methionine aminopeptidase 2.